Here is a 411-residue protein sequence, read N- to C-terminus: Solute carrier RCH1 (411 aa).

The Cytoplasmic segment spans residues 1-17 (MSLETFRESKAYKWTSK). The chain crosses the membrane as a helical span at residues 18–38 (VISFLIGQWFFIFLGVFIALA). The Extracellular segment spans residues 39-52 (HSYPEFAKQGGTIR). A helical transmembrane segment spans residues 53 to 73 (AEYSIGYGAVAVIFLISGLSM). The Cytoplasmic portion of the chain corresponds to 74 to 89 (STKQLLVNVANWRAHF). The chain crosses the membrane as a helical span at residues 90–110 (TVLSMSFLVTSAIIYGIASGI). Residues 111–120 (KASHNGQIDD) lie on the Extracellular side of the membrane. Residues 121–141 (WLLIGLIVTHACPTTVSSNVV) form a helical membrane-spanning segment. Topologically, residues 142–150 (MTKQAHGND) are cytoplasmic. Residues 151–171 (ILTLCEVFIGNVLGAFITPAL) form a helical membrane-spanning segment. Residues 172–204 (LQMYMRGTWEIGNPSHQTQGDSTVQELYAHTMK) are Extracellular-facing. Residues 205-225 (QLGLSVFVPLFVGQVVQNIFP) form a helical membrane-spanning segment. Topologically, residues 226–242 (KQTKWCLTTFKLNKVGS) are cytoplasmic. The helical transmembrane segment at 243 to 263 (FMLLLIMFQSFSTAFAQHAFT) threads the bilayer. Topologically, residues 264–269 (SVSHAS) are extracellular. Residues 270 to 290 (IIFLVFFNIGIYLFFTVLTFF) traverse the membrane as a helical segment. At 291–329 (YSRPFWILRVFKEEPNESSSKLYRYSYAFFRPFYYNRKD) the chain is on the cytoplasmic side. A helical membrane pass occupies residues 330–350 (TVAVMLCGPAKTAALGVSLVS). Residues 351–361 (SQYGSHNPKLG) are Extracellular-facing. The helical transmembrane segment at 362–382 (IILVPLVLYQAEQVMTANVLV) threads the bilayer. Topologically, residues 383–411 (SFMRKWIHAEDKVPEDEETSVGSDNDPKK) are cytoplasmic.

This sequence belongs to the bile acid:sodium symporter (BASS) (TC 2.A.28) family.

It localises to the cell membrane. It is found in the bud neck. Solute carrier protein that negatively regulates the cytosolic homeostasis in response to high levels of extracellular calcium. The chain is Solute carrier RCH1 from Candida albicans (strain SC5314 / ATCC MYA-2876) (Yeast).